A 333-amino-acid chain; its full sequence is Phenylalanine--tRNA ligase alpha subunit (333 aa).

Position 248 (E248) interacts with Mg(2+).

It belongs to the class-II aminoacyl-tRNA synthetase family. Phe-tRNA synthetase alpha subunit type 1 subfamily. In terms of assembly, tetramer of two alpha and two beta subunits. Requires Mg(2+) as cofactor.

The protein localises to the cytoplasm. The enzyme catalyses tRNA(Phe) + L-phenylalanine + ATP = L-phenylalanyl-tRNA(Phe) + AMP + diphosphate + H(+). This chain is Phenylalanine--tRNA ligase alpha subunit, found in Ureaplasma parvum serovar 3 (strain ATCC 27815 / 27 / NCTC 11736).